The following is a 202-amino-acid chain: Outer-membrane lipoprotein LolB (202 aa).

Residues 1-18 form the signal peptide; the sequence is MFRRTYFWLMLLPLFMVG. Cys19 carries the N-palmitoyl cysteine lipid modification. Cys19 carries S-diacylglycerol cysteine lipidation.

Belongs to the LolB family. As to quaternary structure, monomer.

It is found in the cell outer membrane. Its function is as follows. Plays a critical role in the incorporation of lipoproteins in the outer membrane after they are released by the LolA protein. In Vibrio vulnificus (strain YJ016), this protein is Outer-membrane lipoprotein LolB.